A 177-amino-acid chain; its full sequence is MDTTQVTLIHKILAAADERNLPLWIGGGWAIDARLGRVTRKHDDIDLTFPGERRGELEAIVEMLGGRVMEELDYGFLAEIGDELLDCEPAWWADEAYEIAEAPQGSCPEAAEGVIAGRPVRCNSWEAIIWDYFYYADEVPPVDWPTKHIESYRLACTSLGAEKVEVLRAAFRSRYAA.

The tract at residues 1–92 is N-terminal domain; it reads MDTTQVTLIH…ELLDCEPAWW (92 aa). Residues Asp-44, Asp-46, and Asp-86 each coordinate Mg(2+). The active-site Proton acceptor is the Asp-86. Residues 93-177 are C-terminal domain; sequence ADEAYEIAEA…RAAFRSRYAA (85 aa). Ala-100 contacts kanamycin A.

As to quaternary structure, monomer. Requires Mg(2+) as cofactor.

It carries out the reaction nucleoside triphosphate + gentamicin = diphosphate + 2''-nucleotidylgentamicin.. Its function is as follows. Mediates bacterial resistance to kanamycin, gentamicin, dibekacin, sisomicin and tobramycin by adenylating the 2''-hydroxyl group of these antibiotics. In Klebsiella pneumoniae, this protein is 2''-aminoglycoside nucleotidyltransferase.